A 100-amino-acid polypeptide reads, in one-letter code: Large ribosomal subunit protein uL23 (100 aa).

It belongs to the universal ribosomal protein uL23 family. In terms of assembly, part of the 50S ribosomal subunit. Contacts protein L29, and trigger factor when it is bound to the ribosome.

In terms of biological role, one of the early assembly proteins it binds 23S rRNA. One of the proteins that surrounds the polypeptide exit tunnel on the outside of the ribosome. Forms the main docking site for trigger factor binding to the ribosome. This chain is Large ribosomal subunit protein uL23, found in Synechococcus sp. (strain RCC307).